Reading from the N-terminus, the 198-residue chain is Sorcin (198 aa).

4 consecutive EF-hand domains span residues 29–64 (GQTQ…SGIA), 70–103 (FNLE…AVLN), 100–135 (AVLN…MGFR), and 134–169 (FRLS…LRAL). Asp-83, Asp-85, Ser-87, Thr-89, Glu-94, Asp-113, Asp-115, Ser-117, Thr-119, and Glu-124 together coordinate Ca(2+).

As to quaternary structure, homodimer. Interacts with GCA, RYR2 and ANXA7. In terms of tissue distribution, detected in cardiac myocytes.

It is found in the cytoplasm. The protein resides in the sarcoplasmic reticulum membrane. Calcium-binding protein that modulates excitation-contraction coupling in the heart. Contributes to calcium homeostasis in the heart sarcoplasmic reticulum. Modulates the activity of RYR2 calcium channels. The polypeptide is Sorcin (SRI) (Homo sapiens (Human)).